We begin with the raw amino-acid sequence, 230 residues long: Leucyl/phenylalanyl-tRNA--protein transferase (230 aa).

Belongs to the L/F-transferase family.

It is found in the cytoplasm. The catalysed reaction is N-terminal L-lysyl-[protein] + L-leucyl-tRNA(Leu) = N-terminal L-leucyl-L-lysyl-[protein] + tRNA(Leu) + H(+). The enzyme catalyses N-terminal L-arginyl-[protein] + L-leucyl-tRNA(Leu) = N-terminal L-leucyl-L-arginyl-[protein] + tRNA(Leu) + H(+). It catalyses the reaction L-phenylalanyl-tRNA(Phe) + an N-terminal L-alpha-aminoacyl-[protein] = an N-terminal L-phenylalanyl-L-alpha-aminoacyl-[protein] + tRNA(Phe). Its function is as follows. Functions in the N-end rule pathway of protein degradation where it conjugates Leu, Phe and, less efficiently, Met from aminoacyl-tRNAs to the N-termini of proteins containing an N-terminal arginine or lysine. In Syntrophotalea carbinolica (strain DSM 2380 / NBRC 103641 / GraBd1) (Pelobacter carbinolicus), this protein is Leucyl/phenylalanyl-tRNA--protein transferase.